Here is a 171-residue protein sequence, read N- to C-terminus: Ribosome maturation factor RimP (171 aa).

The protein belongs to the RimP family.

The protein resides in the cytoplasm. Functionally, required for maturation of 30S ribosomal subunits. This chain is Ribosome maturation factor RimP, found in Anaeromyxobacter sp. (strain K).